The sequence spans 117 residues: cAMP-regulated phosphoprotein 19-A (117 aa).

Residues 1–37 (MSGENQETKAQEESSALEQKEIDDKVVSPEKSEEIKL) show a composition bias toward basic and acidic residues. The interval 1–54 (MSGENQETKAQEESSALEQKEIDDKVVSPEKSEEIKLKARYPNLGPKPGGSDFL) is disordered. Serine 28 bears the Phosphoserine; by CDK2 mark. Serine 67 is subject to Phosphoserine; by GWL. A disordered region spans residues 78 to 117 (KNKQLPTAASDKTEVTGDHIPTPQDLPQRKPSLVASKLAG). Position 99 is a phosphothreonine; by CDK2 (threonine 99). Serine 109 bears the Phosphoserine; by PKA mark.

It belongs to the endosulfine family. Interacts (when phosphorylated at Ser-67) with ppp2r2d. Post-translationally, phosphorylation at Ser-67 by gwl during mitosis is essential for interaction with ppp2r2d (PR55-delta) and subsequent inactivation of PP2A. Phosphorylated by PKA.

It localises to the cytoplasm. Protein phosphatase inhibitor that specifically inhibits protein phosphatase 2A (PP2A) during mitosis. When phosphorylated at Ser-67 during mitosis, specifically interacts with ppp2r2d (PR55-delta) and inhibits its activity, leading to inactivation of PP2A, an essential condition to keep cyclin-B1-CDK1 activity high during M phase. This chain is cAMP-regulated phosphoprotein 19-A (arpp19-a), found in Xenopus laevis (African clawed frog).